A 241-amino-acid polypeptide reads, in one-letter code: Capsid protein (241 aa).

Residues 1-26 (MSPASSWKRKRPSSSSAQASKKRRVY) carry the Bipartite nuclear localization signal motif. The tract at residues 1–30 (MSPASSWKRKRPSSSSAQASKKRRVYRPAV) is disordered.

The protein belongs to the geminiviridae capsid protein family. In terms of assembly, homomultimer. Interacts with the movement protein. Binds to single-stranded and double-stranded viral DNA.

The protein localises to the virion. It localises to the host nucleus. Encapsidates the viral genome into characteristic twinned ('geminate') particles. Binds the genomic viral ssDNA and shuttles it into and out of the cell nucleus. Plays a role in protection of the genome from degradation, virus acquisition and transmission by insect vectors, infectivity, and systemic movement. The CP of monopartite geminiviruses is absolutely essential for virus movement. The sequence is that of Capsid protein from Avena sativa (Oat).